Here is a 306-residue protein sequence, read N- to C-terminus: Latrophilin receptor-like protein A (306 aa).

The Extracellular portion of the chain corresponds to 1-15; it reads MPSQLLNTVLSYLTD. Residues 16-36 form a helical membrane-spanning segment; the sequence is ILLSLSIVGSFLTIFTFMLYP. The Cytoplasmic portion of the chain corresponds to 37-41; that stretch reads KLRSY. Residues 42–62 traverse the membrane as a helical segment; sequence PIKLIIYLCMSIVFSLFFFEI. The Extracellular segment spans residues 63 to 70; the sequence is SFRSSNSL. The chain crosses the membrane as a helical span at residues 71-91; it reads FCIPAAILVHYFFLANFFWTF. Residues 92–113 lie on the Cytoplasmic side of the membrane; it reads SVSFNFFQMIVKRNRDSEFYER. A helical transmembrane segment spans residues 114–134; that stretch reads YYHLISWGIPFIIIIFCAAFK. Over 135 to 152 the chain is Extracellular; that stretch reads KYVDRGGFCYLEDQYSVY. A helical membrane pass occupies residues 153–173; the sequence is FGFFMPGVIIVCSNICIYVFV. Residues 174–196 lie on the Cytoplasmic side of the membrane; it reads AKEIYKTLRHTPTQKRQTVKEFR. A helical transmembrane segment spans residues 197 to 217; it reads VYFSIFVSIGSSWIFGFIYMF. The Extracellular portion of the chain corresponds to 218–222; that stretch reads SDSNS. A helical membrane pass occupies residues 223–243; the sequence is IIGYIFLILFSISTSLQGFFI. The Cytoplasmic portion of the chain corresponds to 244–306; that stretch reads FISYCLNYKV…TTTTTNVYSA (63 aa). Residues 279–306 form a disordered region; the sequence is TTQSGPTGTTDSSSTMTSTTTTTNVYSA.

The protein belongs to the G-protein coupled receptor 2 family. LN-TM7 subfamily.

The protein resides in the membrane. In Dictyostelium discoideum (Social amoeba), this protein is Latrophilin receptor-like protein A (lrlA).